The following is a 538-amino-acid chain: Dolichol kinase (538 aa).

The Lumenal segment spans residues 1–18; sequence MTRECAPPTPGSGAPLSG. The chain crosses the membrane as a helical span at residues 19 to 39; that stretch reads SVLAEAAVVFVVVLSIHAAVW. The Cytoplasmic portion of the chain corresponds to 40–74; it reads DRYSWCAVALAVQAFYVQYKWDRLLQQGSAVFQFR. The helical transmembrane segment at 75–95 threads the bilayer; it reads MSANSGLLPASVVMPLLGLVM. The Lumenal portion of the chain corresponds to 96–111; sequence KERCQAAGNPYFERFG. The helical transmembrane segment at 112 to 132 threads the bilayer; the sequence is IVVAATGMAVALFSSVLALGI. Residues 133–134 lie on the Cytoplasmic side of the membrane; that stretch reads TR. A helical transmembrane segment spans residues 135–155; the sequence is PVPTNTCVISGLAGGVIIYIM. Topologically, residues 156–163 are lumenal; that stretch reads KHSLSVGE. The helical transmembrane segment at 164–184 threads the bilayer; that stretch reads VIEVLEALLIFVYLNMILLYL. Over 185-188 the chain is Cytoplasmic; the sequence is LPRC. Residues 189–209 traverse the membrane as a helical segment; sequence FTPGEALLVLGGISFMLNQLI. Residues 210 to 224 lie on the Lumenal side of the membrane; it reads KRSLTVVESQGDPLD. A helical membrane pass occupies residues 225–245; it reads FFLLVVVVGMVLMGIFFSTLF. The Cytoplasmic segment spans residues 246 to 254; that stretch reads VFMDSGTWA. The helical transmembrane segment at 255–275 threads the bilayer; that stretch reads SSIFFHLMTCVLGLGVVLPWL. Topologically, residues 276 to 297 are lumenal; the sequence is HRLIRRNPLLWLFQFLFQTETR. Residues 298-318 traverse the membrane as a helical segment; sequence VYLLAYWCLLATVACLVVLYQ. At 319 to 337 the chain is on the cytoplasmic side; the sequence is NAKRSSSESKKHQAPTITR. The helical transmembrane segment at 338–354 threads the bilayer; that stretch reads KYFHFIVVATYIPGIIL. Topologically, residues 355 to 359 are lumenal; that stretch reads DRPLL. Residues 360–380 traverse the membrane as a helical segment; sequence YVAATVCLAVFIFLEYVRYFR. The Cytoplasmic segment spans residues 381-401; that stretch reads IKPLGHTLRSLLSLFLDERDS. The chain crosses the membrane as a helical span at residues 402-422; the sequence is GPLILTHIYLLLGMSLPIWLV. The Lumenal portion of the chain corresponds to 423 to 436; that stretch reads PRPCTQKGSLGGAR. The chain crosses the membrane as a helical span at residues 437 to 457; the sequence is ALVPYAGVLAVGVGDTVASIF. The Cytoplasmic segment spans residues 458-472; it reads GSTMGEIRWPGTKKT. A CTP-binding region spans residues 459-474; sequence STMGEIRWPGTKKTFE. Residues 473–493 form a helical membrane-spanning segment; it reads FEGTMTSIFAQIISVALILIF. Residues 494–495 lie on the Lumenal side of the membrane; that stretch reads DS. The chain crosses the membrane as a helical span at residues 496 to 516; sequence GVDLNYSYAWILGSISTVSLL. Topologically, residues 517–538 are cytoplasmic; the sequence is EAYTTQIDNLLLPLYLLILLMA.

Belongs to the polyprenol kinase family.

The protein resides in the endoplasmic reticulum membrane. The catalysed reaction is a di-trans,poly-cis-dolichol + CTP = a di-trans,poly-cis-dolichyl phosphate + CDP + H(+). It participates in protein modification; protein glycosylation. Functionally, catalyzes CTP-mediated phosphorylation of dolichol, the terminal step in de novo dolichyl monophosphate (Dol-P) biosynthesis. Dol-P is a lipid carrier essential for the synthesis of N-linked and O-linked oligosaccharides and for GPI anchors. The sequence is that of Dolichol kinase (DOLK) from Bos taurus (Bovine).